The primary structure comprises 117 residues: Ig heavy chain V region RF (117 aa).

Residues M1 to C19 form the signal peptide. Residues D20–S49 form a framework-1 region. A disulfide bond links C41 and C115. Residues S50–S54 are complementarity-determining-1. A framework-2 region spans residues W55–A68. The tract at residues A69–G85 is complementarity-determining-2. The framework-3 stretch occupies residues R86–R117.

The protein is Ig heavy chain V region RF of Mus musculus (Mouse).